We begin with the raw amino-acid sequence, 626 residues long: Cysteine desulfurase (626 aa).

Disordered stretches follow at residues Met-1 to Phe-21 and Ala-41 to Ser-64. A cargo-loading domain region spans residues Met-1 to Gln-225. Positions Val-226–Leu-626 are cysteine desulfurase domain. An N6-(pyridoxal phosphate)lysine modification is found at Lys-444. Residue Cys-582 is the Cysteine persulfide intermediate of the active site.

Belongs to the class-V pyridoxal-phosphate-dependent aminotransferase family. Csd subfamily. There are 1-2 copies of this protein in each type 2A encapsulin shell. It depends on pyridoxal 5'-phosphate as a cofactor.

The protein localises to the encapsulin nanocompartment. The enzyme catalyses (sulfur carrier)-H + L-cysteine = (sulfur carrier)-SH + L-alanine. Encapsulated enzyme is 7-fold more active than encapsulated enzyme. In terms of biological role, cargo protein of a type 2A encapsulin nanocompartment probably involved in sulfur metabolism. Cysteine desulfurases mobilize the sulfur from L-cysteine to yield L-alanine, an essential step in sulfur metabolism for biosynthesis of a variety of sulfur-containing biomolecules. The chain is Cysteine desulfurase from Synechococcus elongatus (strain ATCC 33912 / PCC 7942 / FACHB-805) (Anacystis nidulans R2).